A 623-amino-acid polypeptide reads, in one-letter code: Translation initiation factor IF-2 (623 aa).

Positions 1 to 18 (MTLNKKTNNENSSKTTPK) are enriched in low complexity. 2 disordered regions span residues 1–21 (MTLNKKTNNENSSKTTPKLSK) and 92–115 (PQKEQTPPQLQPQKPPLTKSKLQA). Positions 125–293 (KTPPIVTIMG…ILLFSEIQNL (169 aa)) constitute a tr-type G domain. Positions 134 to 141 (GHVDHGKT) are G1. 134–141 (GHVDHGKT) lines the GTP pocket. Residues 159–163 (GITQH) are G2. The segment at 180–183 (DTPG) is G3. GTP-binding positions include 180 to 184 (DTPGH) and 234 to 237 (NKVD). The tract at residues 234–237 (NKVD) is G4. The segment at 270–272 (SAL) is G5.

It belongs to the TRAFAC class translation factor GTPase superfamily. Classic translation factor GTPase family. IF-2 subfamily.

Its subcellular location is the cytoplasm. One of the essential components for the initiation of protein synthesis. Protects formylmethionyl-tRNA from spontaneous hydrolysis and promotes its binding to the 30S ribosomal subunits. Also involved in the hydrolysis of GTP during the formation of the 70S ribosomal complex. This Aster yellows witches'-broom phytoplasma (strain AYWB) protein is Translation initiation factor IF-2.